A 293-amino-acid chain; its full sequence is Ethanolamine ammonia-lyase small subunit (293 aa).

Residues valine 207 and glutamate 228 each coordinate adenosylcob(III)alamin.

Belongs to the EutC family. In terms of assembly, the basic unit is a heterodimer which dimerizes to form tetramers. The heterotetramers trimerize; 6 large subunits form a core ring with 6 small subunits projecting outwards. Adenosylcob(III)alamin is required as a cofactor.

It localises to the bacterial microcompartment. The catalysed reaction is ethanolamine = acetaldehyde + NH4(+). The protein operates within amine and polyamine degradation; ethanolamine degradation. Catalyzes the deamination of various vicinal amino-alcohols to oxo compounds. Allows this organism to utilize ethanolamine as the sole source of nitrogen and carbon in the presence of external vitamin B12. The chain is Ethanolamine ammonia-lyase small subunit from Clostridioides difficile (strain 630) (Peptoclostridium difficile).